Here is a 494-residue protein sequence, read N- to C-terminus: UDP-N-acetylmuramoyl-L-alanyl-D-glutamate--L-lysine ligase (494 aa).

Ser30 provides a ligand contact to UDP-N-acetyl-alpha-D-muramoyl-L-alanyl-D-glutamate. 110 to 116 contacts ATP; sequence GTNGKTS. UDP-N-acetyl-alpha-D-muramoyl-L-alanyl-D-glutamate contacts are provided by residues 152-153, Ser179, and Arg187; that span reads TT. Lys219 is modified (N6-carboxylysine). Positions 406–409 match the L-lysine recognition motif motif; the sequence is DNPA.

This sequence belongs to the MurCDEF family. MurE subfamily. Post-translationally, carboxylation is probably crucial for Mg(2+) binding and, consequently, for the gamma-phosphate positioning of ATP.

The protein localises to the cytoplasm. The enzyme catalyses UDP-N-acetyl-alpha-D-muramoyl-L-alanyl-D-glutamate + L-lysine + ATP = UDP-N-acetyl-alpha-D-muramoyl-L-alanyl-gamma-D-glutamyl-L-lysine + ADP + phosphate + H(+). Its pathway is cell wall biogenesis; peptidoglycan biosynthesis. Its function is as follows. Catalyzes the addition of L-lysine to the nucleotide precursor UDP-N-acetylmuramoyl-L-alanyl-D-glutamate (UMAG) in the biosynthesis of bacterial cell-wall peptidoglycan. The chain is UDP-N-acetylmuramoyl-L-alanyl-D-glutamate--L-lysine ligase from Staphylococcus aureus (strain Mu3 / ATCC 700698).